Here is a 158-residue protein sequence, read N- to C-terminus: Cyclic pyranopterin monophosphate synthase (158 aa).

Residues 74–76 (MCH) and 112–113 (ME) contribute to the substrate site. Asp127 is an active-site residue.

The protein belongs to the MoaC family. As to quaternary structure, homohexamer; trimer of dimers.

The enzyme catalyses (8S)-3',8-cyclo-7,8-dihydroguanosine 5'-triphosphate = cyclic pyranopterin phosphate + diphosphate. Its pathway is cofactor biosynthesis; molybdopterin biosynthesis. Catalyzes the conversion of (8S)-3',8-cyclo-7,8-dihydroguanosine 5'-triphosphate to cyclic pyranopterin monophosphate (cPMP). The polypeptide is Cyclic pyranopterin monophosphate synthase (Thermoanaerobacter sp. (strain X514)).